A 200-amino-acid polypeptide reads, in one-letter code: Holliday junction branch migration complex subunit RuvA (200 aa).

A domain I region spans residues 1-64; the sequence is MIGHLRGIIV…EDAHTLYGFH (64 aa). The tract at residues 65–143 is domain II; sequence NDHERRLFRA…RWHTNDTPSP (79 aa). The interval 133–152 is disordered; it reads SRWHTNDTPSPEGLRSSNTQ. The interval 144 to 148 is flexible linker; sequence EGLRS. Residues 149–200 form a domain III region; sequence SNTQPTQDAISALMALGYKPQEAKRAIDAIQKPDLSAETLIRLALKQMVLGT.

The protein belongs to the RuvA family. Homotetramer. Forms an RuvA(8)-RuvB(12)-Holliday junction (HJ) complex. HJ DNA is sandwiched between 2 RuvA tetramers; dsDNA enters through RuvA and exits via RuvB. An RuvB hexamer assembles on each DNA strand where it exits the tetramer. Each RuvB hexamer is contacted by two RuvA subunits (via domain III) on 2 adjacent RuvB subunits; this complex drives branch migration. In the full resolvosome a probable DNA-RuvA(4)-RuvB(12)-RuvC(2) complex forms which resolves the HJ.

Its subcellular location is the cytoplasm. Its function is as follows. The RuvA-RuvB-RuvC complex processes Holliday junction (HJ) DNA during genetic recombination and DNA repair, while the RuvA-RuvB complex plays an important role in the rescue of blocked DNA replication forks via replication fork reversal (RFR). RuvA specifically binds to HJ cruciform DNA, conferring on it an open structure. The RuvB hexamer acts as an ATP-dependent pump, pulling dsDNA into and through the RuvAB complex. HJ branch migration allows RuvC to scan DNA until it finds its consensus sequence, where it cleaves and resolves the cruciform DNA. The chain is Holliday junction branch migration complex subunit RuvA from Coxiella burnetii (strain CbuK_Q154) (Coxiella burnetii (strain Q154)).